Consider the following 513-residue polypeptide: Glutamyl-tRNA(Gln) amidotransferase subunit A (513 aa).

Catalysis depends on charge relay system residues lysine 85 and serine 160. Serine 184 acts as the Acyl-ester intermediate in catalysis.

This sequence belongs to the amidase family. GatA subfamily. In terms of assembly, heterotrimer of A, B and C subunits.

The enzyme catalyses L-glutamyl-tRNA(Gln) + L-glutamine + ATP + H2O = L-glutaminyl-tRNA(Gln) + L-glutamate + ADP + phosphate + H(+). In terms of biological role, allows the formation of correctly charged Gln-tRNA(Gln) through the transamidation of misacylated Glu-tRNA(Gln) in organisms which lack glutaminyl-tRNA synthetase. The reaction takes place in the presence of glutamine and ATP through an activated gamma-phospho-Glu-tRNA(Gln). This is Glutamyl-tRNA(Gln) amidotransferase subunit A from Bifidobacterium longum (strain NCC 2705).